Consider the following 131-residue polypeptide: Single-stranded DNA-binding protein 2 (131 aa).

The SSB domain occupies 1–103 (MYNKVIMIGR…VLASSFQLLE (103 aa)). Positions 126–131 (EEELPF) match the Important for interaction with partner proteins motif.

Homotetramer.

In terms of biological role, plays an important role in DNA replication, recombination and repair. Binds to ssDNA and to an array of partner proteins to recruit them to their sites of action during DNA metabolism. The chain is Single-stranded DNA-binding protein 2 (ssb2) from Streptococcus agalactiae serotype V (strain ATCC BAA-611 / 2603 V/R).